The primary structure comprises 137 residues: Acidic phospholipase A2 beta-bungarotoxin A chain (137 aa).

An N-terminal signal peptide occupies residues 1–9 (AVCVSLLGA). The propeptide occupies 10–17 (ANIPPHPL). Intrachain disulfides connect Cys44–Cys136, Cys46–Cys62, Cys61–Cys117, Cys68–Cys110, Cys78–Cys103, and Cys96–Cys108. Positions 45, 47, and 49 each coordinate Ca(2+). His65 is a catalytic residue. Asp66 serves as a coordination point for Ca(2+). Residue Asp111 is part of the active site.

It belongs to the phospholipase A2 family. Group I subfamily. D49 sub-subfamily. As to quaternary structure, heterodimer; disulfide-linked. The A chain has phospholipase A2 activity and the B chain shows homology with the basic protease inhibitors. It depends on Ca(2+) as a cofactor. In terms of tissue distribution, expressed by the venom gland.

It localises to the secreted. The catalysed reaction is a 1,2-diacyl-sn-glycero-3-phosphocholine + H2O = a 1-acyl-sn-glycero-3-phosphocholine + a fatty acid + H(+). Its function is as follows. Beta bungarotoxin is a presynaptic neurotoxin. The A chain has phospholipase activity. PLA2 catalyzes the calcium-dependent hydrolysis of the 2-acyl groups in 3-sn-phosphoglycerides. The polypeptide is Acidic phospholipase A2 beta-bungarotoxin A chain (Bungarus candidus (Malayan krait)).